The chain runs to 95 residues: Co-chaperonin GroES (95 aa).

Belongs to the GroES chaperonin family. As to quaternary structure, heptamer of 7 subunits arranged in a ring. Interacts with the chaperonin GroEL.

The protein resides in the cytoplasm. Together with the chaperonin GroEL, plays an essential role in assisting protein folding. The GroEL-GroES system forms a nano-cage that allows encapsulation of the non-native substrate proteins and provides a physical environment optimized to promote and accelerate protein folding. GroES binds to the apical surface of the GroEL ring, thereby capping the opening of the GroEL channel. In Chlorobium phaeobacteroides (strain DSM 266 / SMG 266 / 2430), this protein is Co-chaperonin GroES.